A 170-amino-acid polypeptide reads, in one-letter code: Adenine phosphoribosyltransferase (170 aa).

Belongs to the purine/pyrimidine phosphoribosyltransferase family. In terms of assembly, homodimer.

The protein resides in the cytoplasm. The catalysed reaction is AMP + diphosphate = 5-phospho-alpha-D-ribose 1-diphosphate + adenine. Its pathway is purine metabolism; AMP biosynthesis via salvage pathway; AMP from adenine: step 1/1. In terms of biological role, catalyzes a salvage reaction resulting in the formation of AMP, that is energically less costly than de novo synthesis. The sequence is that of Adenine phosphoribosyltransferase from Acholeplasma laidlawii (strain PG-8A).